The sequence spans 292 residues: MPWLQVRLAISPEQAETYEDALLEVGAVSVTFMDAEDQPIFEPDLNTTPLWSHTHLLALFEADADPEQVFAHLRLLTGAELPEHQAEVIEDQDWERSWMDNFQPMRFGRRLWIVPSWHEAPEKDAVNLLLDPGLAFGTGTHPTTALCLEWLDGQQLEGTQVLDFGCGSGILAIAALLLGAREAVGTDIDVQAIEASRDNAQRNGVADEKLALYLPEHMPAMQADVLVANILAGPLVSLAPQLSGLVRPGGLLALSGILAEQGEEVAAAYAADFELDPIVVRDGWVRISGRRR.

Thr144, Gly165, Asp187, and Asn229 together coordinate S-adenosyl-L-methionine.

The protein belongs to the methyltransferase superfamily. PrmA family.

The protein localises to the cytoplasm. The catalysed reaction is L-lysyl-[protein] + 3 S-adenosyl-L-methionine = N(6),N(6),N(6)-trimethyl-L-lysyl-[protein] + 3 S-adenosyl-L-homocysteine + 3 H(+). Methylates ribosomal protein L11. The polypeptide is Ribosomal protein L11 methyltransferase (Pseudomonas putida (strain W619)).